The following is a 330-amino-acid chain: Protein-lysine N-methyltransferase EEF2KMT (330 aa).

N-acetylmethionine is present on Met1. S-adenosyl-L-methionine is bound by residues Trp139, 165 to 167 (GSG), Trp228, and Ala247.

It belongs to the class I-like SAM-binding methyltransferase superfamily. EEF2KMT family. Interacts with FAM86B2 and FAM86C1P.

It is found in the cytoplasm. It catalyses the reaction L-lysyl-[protein] + 3 S-adenosyl-L-methionine = N(6),N(6),N(6)-trimethyl-L-lysyl-[protein] + 3 S-adenosyl-L-homocysteine + 3 H(+). Functionally, catalyzes the trimethylation of eukaryotic elongation factor 2 (EEF2) on 'Lys-525'. This Homo sapiens (Human) protein is Protein-lysine N-methyltransferase EEF2KMT.